We begin with the raw amino-acid sequence, 173 residues long: MHVDIVPVGDLPAVVKREASSGLRSVYDCEVTIHDSQPVPDGAYDSGRDQYRAEEFIELASRVGNGEKNIAITDTDLYYRRRNYVFGLAYLSGKGSVISTHRLQTSSDGGFSEKSAGDIFADRVRKEVVHEVGHTLGLEHCDNSRCVMNFSPTVREVDVKEENLCGSCQRQIL.

Position 130 (His-130) interacts with Zn(2+). The Proton acceptor role is filled by Glu-131. Zn(2+)-binding residues include His-134, His-140, Cys-141, Cys-146, Cys-165, and Cys-168.

This sequence belongs to the peptidase M54 family. In terms of assembly, monomer. The cofactor is Zn(2+).

In terms of biological role, probable zinc metalloprotease whose natural substrate is unknown. In Natronomonas pharaonis (strain ATCC 35678 / DSM 2160 / CIP 103997 / JCM 8858 / NBRC 14720 / NCIMB 2260 / Gabara) (Halobacterium pharaonis), this protein is Archaemetzincin.